We begin with the raw amino-acid sequence, 728 residues long: Homoaconitase, mitochondrial (728 aa).

A mitochondrion-targeting transit peptide spans 1–24 (MVAIPRLARLSVPAWALSARGRFY). [4Fe-4S] cluster-binding residues include Cys362, Cys422, and Cys425.

This sequence belongs to the aconitase/IPM isomerase family. [4Fe-4S] cluster serves as cofactor.

It is found in the mitochondrion. It carries out the reaction (2R,3S)-homoisocitrate = cis-homoaconitate + H2O. The protein operates within amino-acid biosynthesis; L-lysine biosynthesis via AAA pathway; L-alpha-aminoadipate from 2-oxoglutarate: step 3/5. Catalyzes the reversible hydration of cis-homoaconitate to (2R,3S)-homoisocitrate, a step in the alpha-aminoadipate pathway for lysine biosynthesis. The sequence is that of Homoaconitase, mitochondrial (LYS4) from Cryptococcus neoformans var. neoformans serotype D (strain B-3501A) (Filobasidiella neoformans).